The primary structure comprises 318 residues: MKKFTCVQDIGDLKSALAEAFEIQKDRFKYVELGRNKTLMMIFFNSSLRTRLSTQKAALNLGMNVMVLDINQGAWKLETERGVIMDGDKPEHLLEAIPVMGCYCDIIGVRSFARFEDRDFDYQETILNQFIQYSGRPVFSMEAATRHPLQSFADLITIEEYKKTARPKVVMTWAPHPRPLPQAVPNSFAEWMNATDYDFVITHPEGYELAPQFVGNAKVEYDQMKAFEGADFIYAKNWAAYTGDNYGQILSKDREWTVSDRQMAVTNNAFFMHCLPVRRNMIVTDDVIESPQSIVIPEAANREISATVVLKRLIEGLE.

Carbamoyl phosphate is bound by residues serine 47–threonine 50, tryptophan 75, and arginine 110. Residue glutamate 142 participates in N(2)-succinyl-L-ornithine binding. Histidine 147–glutamine 150 contributes to the carbamoyl phosphate binding site. 2 residues coordinate N(2)-succinyl-L-ornithine: histidine 176 and lysine 236. Residue cysteine 274–leucine 275 participates in carbamoyl phosphate binding. Residue arginine 278 participates in N(2)-succinyl-L-ornithine binding. Arginine 302 provides a ligand contact to carbamoyl phosphate.

This sequence belongs to the aspartate/ornithine carbamoyltransferase superfamily. SOTCase family. As to quaternary structure, homotrimer.

It carries out the reaction N(2)-succinyl-L-ornithine + carbamoyl phosphate = N(2)-succinyl-L-citrulline + phosphate + H(+). Its pathway is amino-acid biosynthesis; L-arginine biosynthesis. In terms of biological role, catalyzes the transfer of the carbamoyl group from carbamoyl phosphate to the delta-amino group of N(2)-succinyl-L-ornithine to produce N(2)-succinyl-L-citrulline. Is essential for arginine biosynthesis. Has no activity with either L-ornithine or L-aspartate as substrate. Also has no detectable AOTCase activity, being unable to convert N(2)-acetyl-L-ornithine to N(2)-acetyl-L-citrulline. The sequence is that of N-succinylornithine carbamoyltransferase from Bacteroides thetaiotaomicron (strain ATCC 29148 / DSM 2079 / JCM 5827 / CCUG 10774 / NCTC 10582 / VPI-5482 / E50).